A 580-amino-acid chain; its full sequence is Negative elongation factor B (580 aa).

Lysine 519 carries the N6-acetyllysine modification. The tract at residues 548–580 (LEQLDHRKPSPAQAAETPALELPLPSVPAPAPL) is disordered. At serine 557 the chain carries Phosphoserine.

It belongs to the NELF-B family. The NELF complex is composed of NELFA, NELFB, NELFCD (isoform NELF-C or isoform NELF-D) and NELFE; the N-terminus of NELFB binds to the NELFA:NELFCD subcomplex. Binds RNA which may help to stabilize the NELF complex on nucleic acid. Interacts with the first BRCT repeat of BRCA1. Interacts with KIAA1191. Interacts with NELFE. As to expression, widely expressed. Expressed in heart, brain, lung, placenta, liver, skeletal muscle, kidney and pancreas.

The protein localises to the nucleus. In terms of biological role, essential component of the NELF complex, a complex that negatively regulates the elongation of transcription by RNA polymerase II. The NELF complex, which acts via an association with the DSIF complex and causes transcriptional pausing, is counteracted by the P-TEFb kinase complex. May be able to induce chromatin unfolding. Essential for early embryogenesis; plays an important role in maintaining the undifferentiated state of embryonic stem cells (ESCs) by preventing unscheduled expression of developmental genes. Plays a key role in establishing the responsiveness of stem cells to developmental cues; facilitates plasticity and cell fate commitment in ESCs by establishing the appropriate expression level of signaling molecules. Supports the transcription of genes involved in energy metabolism in cardiomyocytes; facilitates the association of transcription initiation factors with the promoters of the metabolism-related genes. (Microbial infection) The NELF complex is involved in HIV-1 latency possibly involving recruitment of PCF11 to paused RNA polymerase II. In vitro, binds weakly to the HIV-1 TAR RNA which is located in the long terminal repeat (LTR) of HIV-1. This chain is Negative elongation factor B (NELFB), found in Homo sapiens (Human).